Here is a 134-residue protein sequence, read N- to C-terminus: Large ribosomal subunit protein bL20 (134 aa).

The protein belongs to the bacterial ribosomal protein bL20 family.

Its function is as follows. Binds directly to 23S ribosomal RNA and is necessary for the in vitro assembly process of the 50S ribosomal subunit. It is not involved in the protein synthesizing functions of that subunit. This Rhizobium rhizogenes (strain K84 / ATCC BAA-868) (Agrobacterium radiobacter) protein is Large ribosomal subunit protein bL20.